The sequence spans 743 residues: Putative metallophosphoesterase At3g03305 (743 aa).

An N-terminal signal peptide occupies residues 1-40 (MESIGDDDELRSKTVSLPRRISFTILLLLLLISLSTRVSG). A divalent metal cation contacts are provided by D66, H68, and D101. Transmembrane regions (helical) follow at residues 514 to 534 (ILWPALYSLFLVFLIPKCIII), 565 to 585 (MPVVWFGYMAYLFYLIFFPWF), 623 to 643 (VMVVVIPHVVFVVIPSVLVVC), 687 to 704 (LFRKSVLLASLALYWKHF), and 716 to 736 (MNVVHFPGYSLVVPLLLLYVI).

This sequence belongs to the metallophosphoesterase superfamily. The cofactor is a divalent metal cation.

The protein resides in the membrane. The chain is Putative metallophosphoesterase At3g03305 from Arabidopsis thaliana (Mouse-ear cress).